The sequence spans 110 residues: ORC1-type DNA replication protein 3 (110 aa).

ATP is bound at residue 8–12 (SGKSL).

Belongs to the CDC6/cdc18 family.

Its function is as follows. Involved in regulation of DNA replication. This is ORC1-type DNA replication protein 3 (orc3) from Halobacterium salinarum (strain ATCC 700922 / JCM 11081 / NRC-1) (Halobacterium halobium).